The sequence spans 300 residues: Acetylglutamate kinase (300 aa).

Residues 73–74, Arg95, and Asn197 each bind substrate; that span reads GG.

It belongs to the acetylglutamate kinase family. ArgB subfamily.

The protein resides in the cytoplasm. The enzyme catalyses N-acetyl-L-glutamate + ATP = N-acetyl-L-glutamyl 5-phosphate + ADP. It participates in amino-acid biosynthesis; L-arginine biosynthesis; N(2)-acetyl-L-ornithine from L-glutamate: step 2/4. Its function is as follows. Catalyzes the ATP-dependent phosphorylation of N-acetyl-L-glutamate. This Polynucleobacter necessarius subsp. necessarius (strain STIR1) protein is Acetylglutamate kinase.